The primary structure comprises 251 residues: 5'-nucleotidase SurE (251 aa).

Residues Asp8, Asp9, Ser40, and Asn95 each contribute to the a divalent metal cation site.

The protein belongs to the SurE nucleotidase family. Requires a divalent metal cation as cofactor.

Its subcellular location is the cytoplasm. The catalysed reaction is a ribonucleoside 5'-phosphate + H2O = a ribonucleoside + phosphate. Nucleotidase that shows phosphatase activity on nucleoside 5'-monophosphates. This chain is 5'-nucleotidase SurE, found in Maridesulfovibrio salexigens (strain ATCC 14822 / DSM 2638 / NCIMB 8403 / VKM B-1763) (Desulfovibrio salexigens).